Consider the following 323-residue polypeptide: Sphingolipid delta(4)-desaturase/C4-monooxygenase DES2 (323 aa).

G2 carries N-myristoyl glycine lipidation. Helical transmembrane passes span 41–61 (PHIKWTVSGMVLVQVLACWLV) and 68–88 (WLLFWAYAFGGCINHSLTLAI). The Histidine box-1 motif lies at 89 to 93 (HDISH). Positions 95-99 (TAFGT) are required for C4-hydroxylase activity. The Histidine box-2 motif lies at 128–132 (HVDHH). Residues 210 to 231 (VYLLGSSLLGLGLHPISGHFVA) form a helical membrane-spanning segment. Positions 259–263 (HMEHH) match the Histidine box-3 motif.

The protein belongs to the fatty acid desaturase type 1 family. DEGS subfamily. Highly expressed in intestinal crypt cells and adjacent epithelial cells (at protein level).

It is found in the endoplasmic reticulum membrane. It carries out the reaction a dihydroceramide + 2 Fe(II)-[cytochrome b5] + O2 + 2 H(+) = a phytoceramide + 2 Fe(III)-[cytochrome b5] + H2O. The enzyme catalyses an N-acylsphinganine + 2 Fe(II)-[cytochrome b5] + O2 + 2 H(+) = an N-acylsphing-4-enine + 2 Fe(III)-[cytochrome b5] + 2 H2O. The catalysed reaction is an N-acylsphinganine + 2 Fe(II)-[cytochrome b5] + O2 + 2 H(+) = an N-acyl-(4R)-4-hydroxysphinganine + 2 Fe(III)-[cytochrome b5] + H2O. It catalyses the reaction N-octanoylsphinganine + 2 Fe(II)-[cytochrome b5] + O2 + 2 H(+) = N-octanoyl-4-hydroxysphinganine + 2 Fe(III)-[cytochrome b5] + H2O. Its pathway is membrane lipid metabolism; sphingolipid biosynthesis. In terms of biological role, bifunctional enzyme which acts both as a sphingolipid delta(4)-desaturase and a sphingolipid C4-monooxygenase. The sequence is that of Sphingolipid delta(4)-desaturase/C4-monooxygenase DES2 from Mus musculus (Mouse).